A 419-amino-acid chain; its full sequence is UDP-N-acetylglucosamine 1-carboxyvinyltransferase (419 aa).

Position 22-23 (22-23 (KN)) interacts with phosphoenolpyruvate. UDP-N-acetyl-alpha-D-glucosamine is bound at residue R93. C117 (proton donor) is an active-site residue. C117 is modified (2-(S-cysteinyl)pyruvic acid O-phosphothioketal). Residues D307 and I329 each coordinate UDP-N-acetyl-alpha-D-glucosamine.

It belongs to the EPSP synthase family. MurA subfamily.

Its subcellular location is the cytoplasm. The catalysed reaction is phosphoenolpyruvate + UDP-N-acetyl-alpha-D-glucosamine = UDP-N-acetyl-3-O-(1-carboxyvinyl)-alpha-D-glucosamine + phosphate. Its pathway is cell wall biogenesis; peptidoglycan biosynthesis. Functionally, cell wall formation. Adds enolpyruvyl to UDP-N-acetylglucosamine. This chain is UDP-N-acetylglucosamine 1-carboxyvinyltransferase, found in Shewanella baltica (strain OS195).